A 423-amino-acid polypeptide reads, in one-letter code: uncharacterized protein (423 aa).

The tract at residues 383–423 (ARGTTGGGGTRSGTSTDGQEDGRKPPVVVIREQPPPGNPPR) is disordered.

It belongs to the mycobacterial PPE family.

This is an uncharacterized protein from Mycobacterium tuberculosis (strain CDC 1551 / Oshkosh).